Reading from the N-terminus, the 361-residue chain is Ubiquitin fusion degradation protein 1 (361 aa).

Monoubiquitin-binding stretches follow at residues 27–28 (CY), 30–32 (IAM), and 99–101 (WMM). A disordered region spans residues 310 to 361 (EDEESAAGSKSSEQNFQGQGISLRKSNKRKTKSDHDSSKSKAPKSPEVIEID). Residues 317-329 (GSKSSEQNFQGQG) show a composition bias toward polar residues. Ser354 carries the post-translational modification Phosphoserine.

Belongs to the UFD1 family. In terms of assembly, component of the heterotrimeric CDC48-NPL4-UFD1 ATPase complex. The CDC48-NPL4-UFD1 ATPase complex interacts with the HRD1 ubiquitin ligase complex composed of the E3 ligase HRD1, its cofactors HRD3, USA1 and DER1, substrate recruiting factor YOS9 and CDC48-binding protein UBX2. Interaction between the complexes is mediated by interaction between CDC48-NPL4-UFD1 complex member CDC48 and HRD1 complex member UBX2. Forms a complex composed of CDC48, NPL4, UFD1, DOA1, SHP1 and deubiquitinase OTU1. Interacts with NPL4, CDC48 and UBX2.

Functions at a post-ubiquitation step in the ubiquitin fusion degradation (UFD) pathway. Has a role in the endoplasmic reticulum-associated degradation (ERAD) pathway. Required for the proteasome-dependent processing/activation of MGA2 and SPT23 transcription factors leading to the subsequent expression of OLE1. Has an additional role in the turnover of OLE1 where it targets ubiquitinated OLE1 and other proteins to the ERAD. This is Ubiquitin fusion degradation protein 1 (UFD1) from Saccharomyces cerevisiae (strain ATCC 204508 / S288c) (Baker's yeast).